Here is a 332-residue protein sequence, read N- to C-terminus: tRNA U34 carboxymethyltransferase (332 aa).

Carboxy-S-adenosyl-L-methionine contacts are provided by residues Lys91, Trp105, Lys110, Gly130, 152-154, 181-182, Met196, Tyr200, and Arg315; these read DPS and IE.

The protein belongs to the class I-like SAM-binding methyltransferase superfamily. CmoB family. Homotetramer.

It carries out the reaction carboxy-S-adenosyl-L-methionine + 5-hydroxyuridine(34) in tRNA = 5-carboxymethoxyuridine(34) in tRNA + S-adenosyl-L-homocysteine + H(+). Its function is as follows. Catalyzes carboxymethyl transfer from carboxy-S-adenosyl-L-methionine (Cx-SAM) to 5-hydroxyuridine (ho5U) to form 5-carboxymethoxyuridine (cmo5U) at position 34 in tRNAs. This Shewanella putrefaciens (strain CN-32 / ATCC BAA-453) protein is tRNA U34 carboxymethyltransferase.